A 513-amino-acid chain; its full sequence is Zinc finger protein 395 (513 aa).

Residues 17–29 (ARVLGPSASEGPS) are compositionally biased toward low complexity. The tract at residues 17–56 (ARVLGPSASEGPSAAPPSEPLLEGAAPQPFTTSDDTPCQE) is disordered. Positions 45 to 55 (PFTTSDDTPCQ) are enriched in polar residues. The Nuclear export signal motif lies at 165 to 174 (MDEMMAAMVL). The interval 204–269 (KESGDISDSG…DPFLLDEPAP (66 aa)) is disordered. Residues 209 to 229 (ISDSGSSTTSGHWSGSSGVST) are compositionally biased toward low complexity. Serine 248 carries the phosphoserine modification. A C2H2-type zinc finger spans residues 280–305 (YKCLWPNCGKVLRSIVGIKRHVKALH). The interval 335–394 (AAAAAAAGTPVPGTPTSEPAPTPSMTGLPLSALPPPLHKAQSSGPEHPGPESSLPSGALS) is disordered. Residues 348-359 (TPTSEPAPTPSM) show a composition bias toward polar residues. Phosphoserine occurs at positions 376 and 449. The segment covering 376–391 (SSGPEHPGPESSLPSG) has biased composition (low complexity).

Interacts with repression-mediating E2 binding site P2 of human papillomavirus type 8 (HPV8). As to expression, widely expressed.

Its subcellular location is the cytoplasm. The protein localises to the nucleus. Its function is as follows. Plays a role in papillomavirus genes transcription. This Homo sapiens (Human) protein is Zinc finger protein 395 (ZNF395).